Consider the following 288-residue polypeptide: 33 kDa chaperonin (288 aa).

Intrachain disulfides connect cysteine 233-cysteine 235 and cysteine 267-cysteine 270.

Belongs to the HSP33 family. In terms of processing, under oxidizing conditions two disulfide bonds are formed involving the reactive cysteines. Under reducing conditions zinc is bound to the reactive cysteines and the protein is inactive.

The protein resides in the cytoplasm. Functionally, redox regulated molecular chaperone. Protects both thermally unfolding and oxidatively damaged proteins from irreversible aggregation. Plays an important role in the bacterial defense system toward oxidative stress. This is 33 kDa chaperonin from Pasteurella multocida (strain Pm70).